The chain runs to 954 residues: Zinc finger protein 618 (954 aa).

An N-acetylmethionine modification is found at Met1. Positions 1 to 19 are enriched in low complexity; sequence MNQPGGAAAPQADGASAAG. The segment at 1-56 is disordered; that stretch reads MNQPGGAAAPQADGASAAGRKSTASRERLKRSQKSTKVEGPEPVPAEASLSAEQGT. Glycyl lysine isopeptide (Lys-Gly) (interchain with G-Cter in SUMO2) cross-links involve residues Lys63 and Lys81. C2H2-type zinc fingers lie at residues 147-169 and 188-210; these read YECG…VRAH and YTCD…RDLH. Lys239 is covalently cross-linked (Glycyl lysine isopeptide (Lys-Gly) (interchain with G-Cter in SUMO2)). The segment at 256–278 adopts a C2H2-type 3 zinc-finger fold; it reads YTCEFCGKQYKYYTPYQEHVALH. Disordered regions lie at residues 282–307 and 337–390; these read STAP…VSPS and RTPP…NSSE. Over residues 340–357 the composition is skewed to polar residues; that stretch reads PATQTQTFRTPNSGSPAS. Basic and acidic residues predominate over residues 366–380; the sequence is FSRRVEGKAQNHFEE. A C2H2-type 4 zinc finger spans residues 392 to 414; the sequence is YTCGACGIQFQFYNNLLEHMQSH. Residues 421–463 form a disordered region; it reads NIASNQSRSPPAVVEEKWKPQAQRNSANNTTTSGLTPNSMIPE. Lys437 participates in a covalent cross-link: Glycyl lysine isopeptide (Lys-Gly) (interchain with G-Cter in SUMO2). The span at 442–459 shows a compositional bias: polar residues; that stretch reads AQRNSANNTTTSGLTPNS.

The protein belongs to the krueppel C2H2-type zinc-finger protein family. Interacts with UHRF2.

The protein localises to the nucleus. Its subcellular location is the chromosome. Regulates UHRF2 function as a specific 5-hydroxymethylcytosine (5hmC) reader by regulating its chromatin localization. This is Zinc finger protein 618 (ZNF618) from Homo sapiens (Human).